The sequence spans 375 residues: Succinyl-diaminopimelate desuccinylase (375 aa).

Zn(2+) is bound at residue His75. Asp77 is a catalytic residue. Asp106 contributes to the Zn(2+) binding site. Glu136 functions as the Proton acceptor in the catalytic mechanism. Zn(2+) is bound by residues Glu137, Glu165, and His348.

It belongs to the peptidase M20A family. DapE subfamily. Homodimer. Requires Zn(2+) as cofactor. Co(2+) is required as a cofactor.

It carries out the reaction N-succinyl-(2S,6S)-2,6-diaminopimelate + H2O = (2S,6S)-2,6-diaminopimelate + succinate. It functions in the pathway amino-acid biosynthesis; L-lysine biosynthesis via DAP pathway; LL-2,6-diaminopimelate from (S)-tetrahydrodipicolinate (succinylase route): step 3/3. Functionally, catalyzes the hydrolysis of N-succinyl-L,L-diaminopimelic acid (SDAP), forming succinate and LL-2,6-diaminopimelate (DAP), an intermediate involved in the bacterial biosynthesis of lysine and meso-diaminopimelic acid, an essential component of bacterial cell walls. The chain is Succinyl-diaminopimelate desuccinylase from Novosphingobium aromaticivorans (strain ATCC 700278 / DSM 12444 / CCUG 56034 / CIP 105152 / NBRC 16084 / F199).